A 311-amino-acid polypeptide reads, in one-letter code: Ribosomal protein L11 methyltransferase (311 aa).

S-adenosyl-L-methionine-binding residues include threonine 162, glycine 183, aspartate 205, and asparagine 248.

It belongs to the methyltransferase superfamily. PrmA family.

The protein localises to the cytoplasm. It carries out the reaction L-lysyl-[protein] + 3 S-adenosyl-L-methionine = N(6),N(6),N(6)-trimethyl-L-lysyl-[protein] + 3 S-adenosyl-L-homocysteine + 3 H(+). Its function is as follows. Methylates ribosomal protein L11. This Bacillus pumilus (strain SAFR-032) protein is Ribosomal protein L11 methyltransferase.